We begin with the raw amino-acid sequence, 290 residues long: 4-hydroxybenzoate octaprenyltransferase (290 aa).

8 helical membrane-spanning segments follow: residues 40-60, 99-119, 120-140, 142-162, 165-185, 215-235, 239-259, and 267-287; these read IAGA…GVVI, LALF…LNEL, TFWL…TKRF, FMPQ…AFAA, GEVP…TVAY, LMIA…GHRL, WPWY…HSLI, and SFHA…GLYF.

The protein belongs to the UbiA prenyltransferase family. The cofactor is Mg(2+).

The protein resides in the cell inner membrane. It catalyses the reaction all-trans-octaprenyl diphosphate + 4-hydroxybenzoate = 4-hydroxy-3-(all-trans-octaprenyl)benzoate + diphosphate. Its pathway is cofactor biosynthesis; ubiquinone biosynthesis. Its function is as follows. Catalyzes the prenylation of para-hydroxybenzoate (PHB) with an all-trans polyprenyl group. Mediates the second step in the final reaction sequence of ubiquinone-8 (UQ-8) biosynthesis, which is the condensation of the polyisoprenoid side chain with PHB, generating the first membrane-bound Q intermediate 3-octaprenyl-4-hydroxybenzoate. In Alcanivorax borkumensis (strain ATCC 700651 / DSM 11573 / NCIMB 13689 / SK2), this protein is 4-hydroxybenzoate octaprenyltransferase.